The chain runs to 220 residues: Large ribosomal subunit protein uL16z (220 aa).

Belongs to the universal ribosomal protein uL16 family. Component of the small ribosomal subunit. Mature ribosomes consist of a small (40S) and a large (60S) subunit. The 40S subunit contains about 33 different proteins and 1 molecule of RNA (18S). The 60S subunit contains about 49 different proteins and 3 molecules of RNA (25S, 5.8S and 5S). Interacts with NIK1. Interacts with LIMYB. In terms of processing, phosphorylated by NIK1 and NIK2 in vitro. As to expression, ubiquitous, with the highest expression in flowers. Expressed in seedlings, leaves, roots, stems and flowers. Expressed in young leaves, mostly in dividing cells and in the hydathodes, in the root tips and lateral root primordia, in pistils, anthers, and pollen grains, and in developing seeds.

It is found in the cytoplasm. The protein localises to the nucleus. Functionally, ribosomal protein involved in translational regulation. Contribute to general translation under UV-B stress. Involved in the NIK1-mediated defense response to geminivirus infection. Acts coordinately with LIMYB as a transcriptional repressor. In Arabidopsis thaliana (Mouse-ear cress), this protein is Large ribosomal subunit protein uL16z.